A 128-amino-acid chain; its full sequence is Small ribosomal subunit protein uS9 (128 aa).

The span at 97 to 113 (RSEGFMTRDPRSVERKK) shows a compositional bias: basic and acidic residues. The disordered stretch occupies residues 97 to 128 (RSEGFMTRDPRSVERKKPGQPKARRRFQFSKR). Over residues 114-128 (PGQPKARRRFQFSKR) the composition is skewed to basic residues.

This sequence belongs to the universal ribosomal protein uS9 family.

This Bacteroides fragilis (strain ATCC 25285 / DSM 2151 / CCUG 4856 / JCM 11019 / LMG 10263 / NCTC 9343 / Onslow / VPI 2553 / EN-2) protein is Small ribosomal subunit protein uS9.